A 334-amino-acid chain; its full sequence is 4-hydroxyproline 2-epimerase (334 aa).

The active-site Proton acceptor is cysteine 91. Substrate is bound by residues 92–93 (GH), histidine 224, and aspartate 250. Catalysis depends on cysteine 254, which acts as the Proton donor. 255–256 (GT) serves as a coordination point for substrate.

It belongs to the proline racemase family.

The enzyme catalyses trans-4-hydroxy-L-proline = cis-4-hydroxy-D-proline. Its function is as follows. Catalyzes the epimerization of trans-4-hydroxy-L-proline (t4LHyp) to cis-4-hydroxy-D-proline (c4DHyp). Is likely involved in a degradation pathway that converts t4LHyp to alpha-ketoglutarate. Displays no proline racemase activity. The polypeptide is 4-hydroxyproline 2-epimerase (Spirosoma linguale (strain ATCC 33905 / DSM 74 / LMG 10896 / Claus 1)).